Here is a 156-residue protein sequence, read N- to C-terminus: Small ribosomal subunit protein uS15 (156 aa).

Residues 1 to 67 (MARMHTRRRG…GVQGTPIPDV (67 aa)) form a disordered region. Over residues 10-19 (GSSDSDKPAA) the composition is skewed to basic and acidic residues. Residues 21–32 (EPPEWSDVDEDA) are compositionally biased toward acidic residues.

It belongs to the universal ribosomal protein uS15 family. Part of the 30S ribosomal subunit.

This chain is Small ribosomal subunit protein uS15, found in Haloarcula marismortui (strain ATCC 43049 / DSM 3752 / JCM 8966 / VKM B-1809) (Halobacterium marismortui).